The following is a 239-amino-acid chain: TPR repeat-containing protein TP_0282 (239 aa).

Residues 21 to 43 (LLVGVLVAILGGLGLSAGCLLVM) form a helical membrane-spanning segment. 2 TPR repeats span residues 112–145 (AYAQACVADIFFARKEWEKAQQAYVRAAYGARRS) and 149–182 (GVYYFNAASCADERGRFEEARELYQRSARVQDFP).

The protein localises to the cell membrane. This is TPR repeat-containing protein TP_0282 from Treponema pallidum (strain Nichols).